The primary structure comprises 174 residues: Shikimate kinase 2 (174 aa).

12–17 (GAGKTT) serves as a coordination point for ATP. Mg(2+)-binding residues include Thr-16 and Asp-32. Residues Asp-34, Arg-58, and Gly-79 each coordinate substrate. The interval 112-126 (AEDPEEAQRPSLTGK) is LID domain. Position 120 (Arg-120) interacts with ATP. Arg-139 contributes to the substrate binding site. ATP is bound at residue Gln-155.

Belongs to the shikimate kinase family. AroL subfamily. In terms of assembly, monomer. It depends on Mg(2+) as a cofactor.

It localises to the cytoplasm. The catalysed reaction is shikimate + ATP = 3-phosphoshikimate + ADP + H(+). It participates in metabolic intermediate biosynthesis; chorismate biosynthesis; chorismate from D-erythrose 4-phosphate and phosphoenolpyruvate: step 5/7. Catalyzes the specific phosphorylation of the 3-hydroxyl group of shikimic acid using ATP as a cosubstrate. This chain is Shikimate kinase 2, found in Yersinia pestis bv. Antiqua (strain Antiqua).